The sequence spans 476 residues: Cysteine--tRNA ligase (476 aa).

Cys29 is a binding site for Zn(2+). The 'HIGH' region motif lies at 31 to 41; sequence PTVYDYTHLGH. Zn(2+) is bound by residues Cys209, His234, and Glu238. Positions 266–270 match the 'KMSKS' region motif; sequence KMSKS. Lys269 lines the ATP pocket.

It belongs to the class-I aminoacyl-tRNA synthetase family. Zn(2+) serves as cofactor.

It localises to the cytoplasm. It catalyses the reaction tRNA(Cys) + L-cysteine + ATP = L-cysteinyl-tRNA(Cys) + AMP + diphosphate. In Thermococcus onnurineus (strain NA1), this protein is Cysteine--tRNA ligase.